A 271-amino-acid polypeptide reads, in one-letter code: MTYLQETSRSAVTVPKLMAMREAGEKIAMLTCYDASFAALLDRAGVDSLLIGDSLGNVLQGQSTTLPVTLDEIAYHTACVARAKPSALIVSDMPFGTYGTPADAYANAVKLMQSGAQMIKLEGGEWLADTVRFLVERSVPVCAHVGLTPQSVHAFGGFKVQGKTESGAAQLLRDSRAMQDAGAQLLVMEAMPTQLAAEVTKQLRIPTIGIGAGVDCSGQVLVLHDMLGIFPGKRPRFVKDFMQGQPSILAAVEAYVRAVKDGTFPGPEHTF.

2 residues coordinate Mg(2+): D53 and D92. 3-methyl-2-oxobutanoate contacts are provided by residues 53 to 54 (DS), D92, and K120. E122 lines the Mg(2+) pocket. E189 acts as the Proton acceptor in catalysis.

Belongs to the PanB family. Homodecamer; pentamer of dimers. The cofactor is Mg(2+).

The protein localises to the cytoplasm. It catalyses the reaction 3-methyl-2-oxobutanoate + (6R)-5,10-methylene-5,6,7,8-tetrahydrofolate + H2O = 2-dehydropantoate + (6S)-5,6,7,8-tetrahydrofolate. The protein operates within cofactor biosynthesis; (R)-pantothenate biosynthesis; (R)-pantoate from 3-methyl-2-oxobutanoate: step 1/2. Functionally, catalyzes the reversible reaction in which hydroxymethyl group from 5,10-methylenetetrahydrofolate is transferred onto alpha-ketoisovalerate to form ketopantoate. The polypeptide is 3-methyl-2-oxobutanoate hydroxymethyltransferase (Paraburkholderia phymatum (strain DSM 17167 / CIP 108236 / LMG 21445 / STM815) (Burkholderia phymatum)).